The primary structure comprises 349 residues: 1-acylglycerol-3-phosphate O-acyltransferase ABHD5 (349 aa).

Ala2 is modified (N-acetylalanine). The 109-residue stretch at 77-185 (PLVLLHGFGG…VEPWGFPERP (109 aa)) folds into the AB hydrolase-1 domain. The HXXXXD motif signature appears at 327-332 (HYVYAD).

It belongs to the peptidase S33 family. ABHD4/ABHD5 subfamily. Interacts with ADRP, PLIN and PNPLA2. Interacts with PLIN5; promotes interaction with PNPLA2.

It localises to the cytoplasm. The protein localises to the lipid droplet. It carries out the reaction a 1-acyl-sn-glycero-3-phosphate + an acyl-CoA = a 1,2-diacyl-sn-glycero-3-phosphate + CoA. The catalysed reaction is 1-(9Z-octadecenoyl)-sn-glycero-3-phosphate + (9Z)-octadecenoyl-CoA = 1,2-di-(9Z-octadecenoyl)-sn-glycero-3-phosphate + CoA. It catalyses the reaction 1-(9Z-octadecenoyl)-sn-glycero-3-phosphate + hexadecanoyl-CoA = 1-(9Z)-octadecenoyl-2-hexadecanoyl-sn-glycero-3-phosphate + CoA. The enzyme catalyses 1-(9Z-octadecenoyl)-sn-glycero-3-phosphate + octadecanoyl-CoA = 1-(9Z-octadecenoyl)-2-octadecanoyl-sn-glycero-3-phosphate + CoA. It carries out the reaction 1-(9Z-octadecenoyl)-sn-glycero-3-phosphate + (5Z,8Z,11Z,14Z)-eicosatetraenoyl-CoA = 1-(9Z)-octadecenoyl-2-(5Z,8Z,11Z,14Z)-eicosatetraenoyl-sn-glycero-3-phosphate + CoA. The catalysed reaction is eicosanoyl-CoA + 1-(9Z-octadecenoyl)-sn-glycero-3-phosphate = 1-(9Z)-octadecenoyl-2-eicosanoyl-sn-glycero-3-phosphate + CoA. It catalyses the reaction 1-hexadecanoyl-sn-glycero-3-phosphate + (9Z)-octadecenoyl-CoA = 1-hexadecanoyl-2-(9Z-octadecenoyl)-sn-glycero-3-phosphate + CoA. The enzyme catalyses 1-octadecanoyl-sn-glycero-3-phosphate + (9Z)-octadecenoyl-CoA = 1-octadecanoyl-2-(9Z-octadecenoyl)-sn-glycero-3-phosphate + CoA. It carries out the reaction 1-(5Z,8Z,11Z,14Z-eicosatetraenoyl)-sn-glycero-3-phosphate + (9Z)-octadecenoyl-CoA = 1-(5Z,8Z,11Z,14Z)-eicosatetraenoyl-2-(9Z)-octadecenoyl-sn-glycero-3-phosphate + CoA. With respect to regulation, acyltransferase activity is inhibited by detergents such as Triton X-100 and 3-[(3-cholamidopropyl)dimethylammonio]-1-propanesulfonate (CHAPS). Acyltransferase activity is inhibited by the presence of magnesium and calcium. Coenzyme A-dependent lysophosphatidic acid acyltransferase that catalyzes the transfer of an acyl group on a lysophosphatidic acid. Functions preferentially with 1-oleoyl-lysophosphatidic acid followed by 1-palmitoyl-lysophosphatidic acid, 1-stearoyl-lysophosphatidic acid and 1-arachidonoyl-lysophosphatidic acid as lipid acceptor. Functions preferentially with arachidonoyl-CoA followed by oleoyl-CoA as acyl group donors. Functions in phosphatidic acid biosynthesis. May regulate the cellular storage of triacylglycerol through activation of the phospholipase PNPLA2. Involved in keratinocyte differentiation. Regulates lipid droplet fusion. This Sus scrofa (Pig) protein is 1-acylglycerol-3-phosphate O-acyltransferase ABHD5.